The sequence spans 307 residues: MTTLGHNYDNSLVSNAFGFLRLPLEFNPYATDADWVITGIPFDMATSGRAGCRHGPAAIRQVSTNLAWEGCRWPWDFDVRKRLKVVDCGDLVYEFGDAQDFCDKLQDHAERLLAAGKRMLSFGGDHFVTLPLLCAHAKHFGKMALVHFDAHTDTYANGSKFDHGSMFYHAPNEGLISPAHSVQIGIRTEFERDNGFTVLDAGQVNDRSVDDILAQVKQIVGNLPVYLTFDIDCLDPSAAPGTGTPVIGGLTSDRALKLVRGLQPLNIVGMDIVEVAPAYDQAQITALVAATLALEMLYIQGAKRGDD.

The Mn(2+) site is built by H126, D149, H151, D153, D230, and D232.

Belongs to the arginase family. Agmatinase subfamily. Mn(2+) is required as a cofactor.

The catalysed reaction is agmatine + H2O = urea + putrescine. Its pathway is amine and polyamine biosynthesis; putrescine biosynthesis via agmatine pathway; putrescine from agmatine: step 1/1. Its function is as follows. Catalyzes the formation of putrescine from agmatine. The sequence is that of Agmatinase from Sodalis glossinidius (strain morsitans).